Reading from the N-terminus, the 386-residue chain is Succinate--CoA ligase [ADP-forming] subunit beta (386 aa).

The ATP-grasp domain occupies K9–E244. Residues K46, G53–G55, E99, C102, and E107 contribute to the ATP site. Residues N199 and D213 each coordinate Mg(2+). Residues N264 and G321–M323 each bind substrate.

Belongs to the succinate/malate CoA ligase beta subunit family. Heterotetramer of two alpha and two beta subunits. The cofactor is Mg(2+).

The catalysed reaction is succinate + ATP + CoA = succinyl-CoA + ADP + phosphate. The enzyme catalyses GTP + succinate + CoA = succinyl-CoA + GDP + phosphate. It participates in carbohydrate metabolism; tricarboxylic acid cycle; succinate from succinyl-CoA (ligase route): step 1/1. Its function is as follows. Succinyl-CoA synthetase functions in the citric acid cycle (TCA), coupling the hydrolysis of succinyl-CoA to the synthesis of either ATP or GTP and thus represents the only step of substrate-level phosphorylation in the TCA. The beta subunit provides nucleotide specificity of the enzyme and binds the substrate succinate, while the binding sites for coenzyme A and phosphate are found in the alpha subunit. The chain is Succinate--CoA ligase [ADP-forming] subunit beta from Bacillus pumilus (strain SAFR-032).